Consider the following 294-residue polypeptide: Phosphonoacetaldehyde hydrolase (294 aa).

The Nucleophile role is filled by Asp19. Asp19 and Ala21 together coordinate Mg(2+). Lys60 (schiff-base intermediate with substrate) is an active-site residue. Asp193 is a binding site for Mg(2+).

Belongs to the HAD-like hydrolase superfamily. PhnX family. As to quaternary structure, homodimer. Mg(2+) serves as cofactor.

The enzyme catalyses phosphonoacetaldehyde + H2O = acetaldehyde + phosphate + H(+). Involved in phosphonate degradation. This Hahella chejuensis (strain KCTC 2396) protein is Phosphonoacetaldehyde hydrolase.